We begin with the raw amino-acid sequence, 277 residues long: Large ribosomal subunit protein uL2 (277 aa).

Residues Gly-222 to Lys-277 are disordered.

The protein belongs to the universal ribosomal protein uL2 family. Part of the 50S ribosomal subunit. Forms a bridge to the 30S subunit in the 70S ribosome.

In terms of biological role, one of the primary rRNA binding proteins. Required for association of the 30S and 50S subunits to form the 70S ribosome, for tRNA binding and peptide bond formation. It has been suggested to have peptidyltransferase activity; this is somewhat controversial. Makes several contacts with the 16S rRNA in the 70S ribosome. The sequence is that of Large ribosomal subunit protein uL2 from Brucella melitensis biotype 1 (strain ATCC 23456 / CCUG 17765 / NCTC 10094 / 16M).